A 429-amino-acid chain; its full sequence is MDRIRIRGGSELNGTIPISGAKNAALPLMIASLLTDDTLTLENVPHLADVEQLIRILGNHGVDYSVNGRRENQDKGYSRTVHFTARSIVDTTAPYELVSKMRASFWVIGPLLARMGEAKVSLPGGCAIGTRPVDLFIEGLRSLGAAIDIEGGYVIARAKDGLVGTRFRFPKVSVGATHVLMMAASLARGQTVLENAAREPEIVNLADCLNAMGAKISGAGTPTITIEGVTSLSGARHRIIPDRIETGTYALAVAMAGGDVMLEGARADLLETALDVIQQTGAEITRADTGIRIRRNGNGISPVDITTEPFPGFPTDLQAQFMAVMTKAKGNSRITETIFENRFMHVQELARLGARISLSGQEAVVEGVDRLKGAPVMATDLRASVSLLIAGLAAEGETTVNRVYHLDRGFERLEEKLSSCGADIERISG.

22 to 23 (KN) lines the phosphoenolpyruvate pocket. Arg102 is a UDP-N-acetyl-alpha-D-glucosamine binding site. The Proton donor role is filled by Cys126. Cys126 is modified (2-(S-cysteinyl)pyruvic acid O-phosphothioketal). UDP-N-acetyl-alpha-D-glucosamine is bound by residues 131 to 135 (RPVDL), 171 to 174 (KVSV), Asp316, and Ile338.

It belongs to the EPSP synthase family. MurA subfamily.

It is found in the cytoplasm. The catalysed reaction is phosphoenolpyruvate + UDP-N-acetyl-alpha-D-glucosamine = UDP-N-acetyl-3-O-(1-carboxyvinyl)-alpha-D-glucosamine + phosphate. It participates in cell wall biogenesis; peptidoglycan biosynthesis. Functionally, cell wall formation. Adds enolpyruvyl to UDP-N-acetylglucosamine. This Chelativorans sp. (strain BNC1) protein is UDP-N-acetylglucosamine 1-carboxyvinyltransferase.